The primary structure comprises 355 residues: Alanine racemase (355 aa).

Lys34 (proton acceptor; specific for D-alanine) is an active-site residue. Lys34 bears the N6-(pyridoxal phosphate)lysine mark. Arg133 provides a ligand contact to substrate. Tyr249 (proton acceptor; specific for L-alanine) is an active-site residue. Met297 is a binding site for substrate.

Belongs to the alanine racemase family. Requires pyridoxal 5'-phosphate as cofactor.

The catalysed reaction is L-alanine = D-alanine. It participates in amino-acid biosynthesis; D-alanine biosynthesis; D-alanine from L-alanine: step 1/1. Catalyzes the interconversion of L-alanine and D-alanine. May also act on other amino acids. In Rickettsia conorii (strain ATCC VR-613 / Malish 7), this protein is Alanine racemase (alr).